We begin with the raw amino-acid sequence, 320 residues long: Polyketide transferase FFUJ_12241 (320 aa).

The tract at residues 58 to 298 (RDITCLAWDP…ILKGKGHLDW (241 aa)) is abhydrolase domain.

This sequence belongs to the polyketide transferase af380 family.

Functionally, polyketide transferase; part of the gene cluster that mediates the biosynthesis of fujikurins A-D, secondary metabolites playing a role during rice infection. The polyketide synthase PKS19 acts with the trans-enoyl reductase FFUJ_12240 and the polyketide transferase FFUJ_12241 to produce fujikurins, however, the biosynthesis pathway has not been identified yet. The polypeptide is Polyketide transferase FFUJ_12241 (Gibberella fujikuroi (strain CBS 195.34 / IMI 58289 / NRRL A-6831) (Bakanae and foot rot disease fungus)).